Here is a 386-residue protein sequence, read N- to C-terminus: Succinate--CoA ligase [ADP-forming] subunit beta (386 aa).

An ATP-grasp domain is found at 9–244 (KDLLTSYAIP…PSQENVRDVL (236 aa)). Residues Lys-46, 53 to 55 (GRG), Val-102, and Glu-107 each bind ATP. Positions 199 and 213 each coordinate Mg(2+). Substrate-binding positions include Asn-264 and 321–323 (GIM).

This sequence belongs to the succinate/malate CoA ligase beta subunit family. Heterotetramer of two alpha and two beta subunits. Mg(2+) is required as a cofactor.

It catalyses the reaction succinate + ATP + CoA = succinyl-CoA + ADP + phosphate. It carries out the reaction GTP + succinate + CoA = succinyl-CoA + GDP + phosphate. Its pathway is carbohydrate metabolism; tricarboxylic acid cycle; succinate from succinyl-CoA (ligase route): step 1/1. Functionally, succinyl-CoA synthetase functions in the citric acid cycle (TCA), coupling the hydrolysis of succinyl-CoA to the synthesis of either ATP or GTP and thus represents the only step of substrate-level phosphorylation in the TCA. The beta subunit provides nucleotide specificity of the enzyme and binds the substrate succinate, while the binding sites for coenzyme A and phosphate are found in the alpha subunit. The protein is Succinate--CoA ligase [ADP-forming] subunit beta of Chlamydia abortus (strain DSM 27085 / S26/3) (Chlamydophila abortus).